The primary structure comprises 237 residues: Ribosomal RNA large subunit methyltransferase E (237 aa).

S-adenosyl-L-methionine-binding residues include Gly-76, Trp-78, Asp-99, Asp-115, and Asp-139. The active-site Proton acceptor is Lys-179.

This sequence belongs to the class I-like SAM-binding methyltransferase superfamily. RNA methyltransferase RlmE family.

It localises to the cytoplasm. The enzyme catalyses uridine(2552) in 23S rRNA + S-adenosyl-L-methionine = 2'-O-methyluridine(2552) in 23S rRNA + S-adenosyl-L-homocysteine + H(+). Specifically methylates the uridine in position 2552 of 23S rRNA at the 2'-O position of the ribose in the fully assembled 50S ribosomal subunit. In Rhodopseudomonas palustris (strain TIE-1), this protein is Ribosomal RNA large subunit methyltransferase E.